The chain runs to 288 residues: HTH-type transcriptional regulator YofA (288 aa).

One can recognise an HTH lysR-type domain in the interval 1-58; sequence MESGDLKIFQAVARKGSISKAAESLHYVQSNVTNRIQQLERQLQTQLFYRTNRGMTLT. Residues 18 to 37 constitute a DNA-binding region (H-T-H motif); that stretch reads ISKAAESLHYVQSNVTNRIQ.

The protein belongs to the LysR transcriptional regulatory family.

It is found in the cytoplasm. Regulates expression of the cell division protein ftsW, and is essential for cell viability during stationary phase. The chain is HTH-type transcriptional regulator YofA (yofA) from Bacillus velezensis (strain DSM 23117 / BGSC 10A6 / LMG 26770 / FZB42) (Bacillus amyloliquefaciens subsp. plantarum).